Here is a 172-residue protein sequence, read N- to C-terminus: uncharacterized protein (172 aa).

Over residues 147 to 159 (AGSGSGSGSGSGS) the composition is skewed to gly residues. A disordered region spans residues 147-172 (AGSGSGSGSGSGSDTGPFKKSQYKIL).

This is an uncharacterized protein from Homo sapiens (Human).